The following is a 160-amino-acid chain: 2-C-methyl-D-erythritol 2,4-cyclodiphosphate synthase (160 aa).

Residues Asp10 and His12 each coordinate a divalent metal cation. 4-CDP-2-C-methyl-D-erythritol 2-phosphate contacts are provided by residues 10-12 (DVH) and 36-37 (HS). Position 44 (His44) interacts with a divalent metal cation. 4-CDP-2-C-methyl-D-erythritol 2-phosphate-binding positions include 58–60 (DIG), 134–137 (TTTE), Phe141, and Arg144.

Belongs to the IspF family. Homotrimer. It depends on a divalent metal cation as a cofactor.

It catalyses the reaction 4-CDP-2-C-methyl-D-erythritol 2-phosphate = 2-C-methyl-D-erythritol 2,4-cyclic diphosphate + CMP. Its pathway is isoprenoid biosynthesis; isopentenyl diphosphate biosynthesis via DXP pathway; isopentenyl diphosphate from 1-deoxy-D-xylulose 5-phosphate: step 4/6. Functionally, involved in the biosynthesis of isopentenyl diphosphate (IPP) and dimethylallyl diphosphate (DMAPP), two major building blocks of isoprenoid compounds. Catalyzes the conversion of 4-diphosphocytidyl-2-C-methyl-D-erythritol 2-phosphate (CDP-ME2P) to 2-C-methyl-D-erythritol 2,4-cyclodiphosphate (ME-CPP) with a corresponding release of cytidine 5-monophosphate (CMP). In Phocaeicola vulgatus (strain ATCC 8482 / DSM 1447 / JCM 5826 / CCUG 4940 / NBRC 14291 / NCTC 11154) (Bacteroides vulgatus), this protein is 2-C-methyl-D-erythritol 2,4-cyclodiphosphate synthase.